Consider the following 433-residue polypeptide: MAPAASADHDMDVDMIHDEEDDQGERLINEEYKTWKKNSPFLTALTWPTLTVQWFPDVKEPEGKNYKIHRLLLGTHTSDESPNYLQIADVQIPKVVAPNPDDYDEERGEIGGYGKSGDVAAIKCDIVQRIEHPGEVNKARYQPQNPDILATLCVDGKILIFDRTKHPLDPTSTGKVNAQIELVGHEAEGFGLNWNPHEEGCLASGSEDTTMRLWDLKTLKADSRILNPSRTYRHHTQIVNDVQYHPISKNFIGSVSDDQTLQIVDIRHSETNKAAVVAKRGHLDAINALAFNPNSEVLVATASADKTIGIWDLRNVKEKVHTLEGHNDAVTSLAWHPTEAGILGSASYDRRIIFWDLSRVGEEQLPDDQDDGPPELLFMHGGHTNHLADFSWNPNEPWLVASAAEDNLLQIWKVAESIVGKDDGDLPIDELDR.

WD repeat units lie at residues 131–171, 184–224, 234–274, 281–321, and 325–365; these read EHPG…LDPT, GHEA…ADSR, HHTQ…TNKA, GHLD…EKVH, and GHND…EEQL. The interval 367–371 is interaction with the histone H4 N-terminus; that stretch reads DDQDD. Residues 382-422 form a WD 6 repeat; it reads GHTNHLADFSWNPNEPWLVASAAEDNLLQIWKVAESIVGKD.

The protein belongs to the WD repeat RBAP46/RBAP48/MSI1 family. Component of the HAT-B complex composed of at least HAT1 and HAT2. The HAT-B complex binds to histone H4 tail.

The protein localises to the cytoplasm. It is found in the nucleus. In terms of biological role, regulatory subunit of the histone acetylase B (HAT-B) complex. The complex acetylates 'Lys-12' of histone H4 which is required for telomeric silencing. The chain is Histone acetyltransferase type B subunit 2 (HAT2) from Gibberella zeae (strain ATCC MYA-4620 / CBS 123657 / FGSC 9075 / NRRL 31084 / PH-1) (Wheat head blight fungus).